Reading from the N-terminus, the 41-residue chain is U-megalopygitoxin(4)-Mo5 (41 aa).

The signal sequence occupies residues 1 to 23 (MKCSLLLVVFAAMVALFAAGTNA).

Belongs to the caterpillar 4 family. In terms of tissue distribution, expressed by the venom apparatus.

Its subcellular location is the secreted. Functionally, probable toxin. The chain is U-megalopygitoxin(4)-Mo5 from Megalopyge opercularis (Southern flannel moth).